Consider the following 441-residue polypeptide: POC1 centriolar protein homolog A (441 aa).

WD repeat units lie at residues G16–R55, G58–A97, A100–S139, Q142–S181, E184–H223, V226–T265, and G268–P307. The segment at D347–P376 is disordered. The segment covering L348–S361 has biased composition (basic and acidic residues). A coiled-coil region spans residues L400–A427.

Belongs to the WD repeat POC1 family. As to quaternary structure, interacts with pat.

Its subcellular location is the cytoplasm. The protein localises to the cytoskeleton. May play an important role in centriole assembly and/or stability and ciliogenesis. The protein is POC1 centriolar protein homolog A (poc1a) of Xenopus laevis (African clawed frog).